The chain runs to 441 residues: Glutamate--tRNA ligase 1 (441 aa).

The 'HIGH' region motif lies at 9 to 19 (PSPTGFIHVGN). The 'KMSKS' region signature appears at 239-243 (ALSKR). Lys-242 is a binding site for ATP.

The protein belongs to the class-I aminoacyl-tRNA synthetase family. Glutamate--tRNA ligase type 1 subfamily. In terms of assembly, monomer.

Its subcellular location is the cytoplasm. The catalysed reaction is tRNA(Glu) + L-glutamate + ATP = L-glutamyl-tRNA(Glu) + AMP + diphosphate. Its function is as follows. Catalyzes the attachment of glutamate to tRNA(Glu) in a two-step reaction: glutamate is first activated by ATP to form Glu-AMP and then transferred to the acceptor end of tRNA(Glu). The sequence is that of Glutamate--tRNA ligase 1 from Cereibacter sphaeroides (strain ATCC 17025 / ATH 2.4.3) (Rhodobacter sphaeroides).